Reading from the N-terminus, the 410-residue chain is Protein CNPPD1 (410 aa).

Residues Cys-233–Ile-253 form a helical membrane-spanning segment.

Belongs to the CNPPD1 family.

The protein localises to the membrane. The sequence is that of Protein CNPPD1 (CNPPD1) from Pongo abelii (Sumatran orangutan).